We begin with the raw amino-acid sequence, 404 residues long: Lipase lipl-3 (404 aa).

The signal sequence occupies residues 1-20 (MCSSLCALLLVILAVHNVHA). The N-linked (GlcNAc...) asparagine glycan is linked to N65. The active-site Nucleophile is S168. Residue N272 is glycosylated (N-linked (GlcNAc...) asparagine). Residues D344 and H376 each act as charge relay system in the active site.

It belongs to the AB hydrolase superfamily. Lipase family.

It is found in the secreted. It localises to the lysosome lumen. Lipase that, together with lipl-1, plays a role in the response to nutrient deprivation by controlling lipid metabolism. Specifically, involved in the breakdown of lipids during lipophagy, a process during which lipids contained in lipid droplets that have been delivered to lysosomes by autophagy are degraded. This is Lipase lipl-3 from Caenorhabditis elegans.